We begin with the raw amino-acid sequence, 129 residues long: Small ribosomal subunit protein uS12 (129 aa).

At Asp-89 the chain carries 3-methylthioaspartic acid. Residues 110 to 129 (RKQGRSRYGAPRKQVVATKK) form a disordered region.

This sequence belongs to the universal ribosomal protein uS12 family. As to quaternary structure, part of the 30S ribosomal subunit. Contacts proteins S8 and S17. May interact with IF1 in the 30S initiation complex.

In terms of biological role, with S4 and S5 plays an important role in translational accuracy. Interacts with and stabilizes bases of the 16S rRNA that are involved in tRNA selection in the A site and with the mRNA backbone. Located at the interface of the 30S and 50S subunits, it traverses the body of the 30S subunit contacting proteins on the other side and probably holding the rRNA structure together. The combined cluster of proteins S8, S12 and S17 appears to hold together the shoulder and platform of the 30S subunit. The protein is Small ribosomal subunit protein uS12 of Rickettsia bellii (strain RML369-C).